The chain runs to 388 residues: Chorismate synthase (388 aa).

Residues Arg39 and Arg45 each contribute to the NADP(+) site. Residues 130–132 (RSS), 251–252 (NA), Gly296, 311–315 (KPIPT), and Arg337 contribute to the FMN site.

It belongs to the chorismate synthase family. Homotetramer. The cofactor is FMNH2.

It catalyses the reaction 5-O-(1-carboxyvinyl)-3-phosphoshikimate = chorismate + phosphate. It functions in the pathway metabolic intermediate biosynthesis; chorismate biosynthesis; chorismate from D-erythrose 4-phosphate and phosphoenolpyruvate: step 7/7. Its function is as follows. Catalyzes the anti-1,4-elimination of the C-3 phosphate and the C-6 proR hydrogen from 5-enolpyruvylshikimate-3-phosphate (EPSP) to yield chorismate, which is the branch point compound that serves as the starting substrate for the three terminal pathways of aromatic amino acid biosynthesis. This reaction introduces a second double bond into the aromatic ring system. This chain is Chorismate synthase, found in Streptococcus pyogenes serotype M2 (strain MGAS10270).